We begin with the raw amino-acid sequence, 198 residues long: Ribonuclease 3-like protein 1 (198 aa).

Over residues 85–110 the composition is skewed to basic and acidic residues; the sequence is KKLAPKPDEEHTTTTKPISKDDESKT. Positions 85 to 115 are disordered; sequence KKLAPKPDEEHTTTTKPISKDDESKTRRGSA. In terms of domain architecture, DRBM spans 114–191; sequence SAKSVLHEMC…AEGALWYLEH (78 aa).

In Arabidopsis thaliana (Mouse-ear cress), this protein is Ribonuclease 3-like protein 1 (RTL1).